We begin with the raw amino-acid sequence, 271 residues long: MFWVNGLPQTHVPLGDRSFQYGDGCFSTIKTKKGQLEHWQAHVERMEACLTTLQIPFPDWRTVLDWAMSATLKDESAGIKIHISRGCGGRGYSPSGVEGPVVTISNFSFPAHYLAWQERGVQLGVCETRLGIQPLLAGHKHNNRIEQVLAKAEIDGTEFADAVTLNVQNHVIETTMANLFWVKDEKVFTPGLCLSGVAGVMRRKVLEYLQSEGYSVQVADFTLTDLLDADEVWMCNSLLGVAPVSGISAPENKIDFPIGKLTRRLQGNLNT.

Lysine 140 carries the post-translational modification N6-(pyridoxal phosphate)lysine.

The protein belongs to the class-IV pyridoxal-phosphate-dependent aminotransferase family. As to quaternary structure, homodimer. Requires pyridoxal 5'-phosphate as cofactor.

The catalysed reaction is 4-amino-4-deoxychorismate = 4-aminobenzoate + pyruvate + H(+). Its pathway is cofactor biosynthesis; tetrahydrofolate biosynthesis; 4-aminobenzoate from chorismate: step 2/2. Its function is as follows. Involved in the biosynthesis of p-aminobenzoate (PABA), a precursor of tetrahydrofolate. Converts 4-amino-4-deoxychorismate into 4-aminobenzoate (PABA) and pyruvate. In Vibrio harveyi (Beneckea harveyi), this protein is Aminodeoxychorismate lyase (pabC).